The primary structure comprises 463 residues: MEKPSREAFEGNNKLLIGIVLSVITFWLFAQSLVNVVPILEDSFNTDIGTVNIAVSITALFSGMFVVGAGGLADKYGRIKLTNIGIILNILGSLLIIISNIPLLLIIGRLIQGLSAACIMPATLSIIKSYYIGKDRQRALSYWSIGSWGGSGVCSFFGGAVATLLGWRWIFILSIIISLIALFLIKGTPETKSKSISLNKFDIKGLVLLVIMLLTLNILITKGSELGVTSLLFITLLAIAIGSFSLFIVLEKRATNPLIDFKLFKNKAYTGATASNFLLNGVAGTLIVANTFVQRGLGYSSLQAGSLSITYLVMVLIMIRVGEKLLQTLGCKKPMLIGTGVLIVGECLISLTFLPEILYVICCIIGYLFFGLGLGIYATPSTDTAIANAPLEKVGVAAGIYKMASALGGAFGVALSGAVYAIVSNMTNIYTGAMIALWLNAGMGILSFVIILLLVPKQNDTQL.

The next 14 membrane-spanning stretches (helical) occupy residues 17–37 (IGIV…VNVV), 53–73 (IAVS…GGLA), 86–106 (IILN…LLLI), 107–127 (IGRL…LSII), 142–162 (YWSI…GAVA), 165–185 (LGWR…LFLI), 201–221 (FDIK…ILIT), 230–250 (SLLF…FIVL), 273–293 (TASN…NTFV), 299–319 (YSSL…LIMI), 334–354 (PMLI…LTFL), 357–377 (ILYV…LGIY), 403–423 (MASA…YAIV), and 435–455 (IALW…LLLV).

The protein belongs to the major facilitator superfamily. TCR/Tet family.

The protein resides in the cell membrane. Functionally, multidrug efflux pump that acts independently of NorA and is one of the factors that confers resistance against diverse quinolones and chemical compounds. This chain is Quinolone resistance protein NorB (norB), found in Staphylococcus aureus (strain Mu3 / ATCC 700698).